Reading from the N-terminus, the 317-residue chain is ADP-L-glycero-D-manno-heptose-6-epimerase (317 aa).

NADP(+) contacts are provided by residues 10-11 (FI), 31-32 (DD), glutamine 38, lysine 53, 75-79 (QGACS), and asparagine 92. The Proton acceptor role is filled by tyrosine 139. Residue lysine 143 coordinates NADP(+). Residue asparagine 166 coordinates substrate. Residues valine 167 and lysine 175 each contribute to the NADP(+) site. The Proton acceptor role is filled by lysine 175. Residues glycine 177, histidine 184, 198-201 (FEGV), arginine 211, and tyrosine 275 each bind substrate.

It belongs to the NAD(P)-dependent epimerase/dehydratase family. HldD subfamily. Homopentamer. Requires NADP(+) as cofactor.

The catalysed reaction is ADP-D-glycero-beta-D-manno-heptose = ADP-L-glycero-beta-D-manno-heptose. It participates in nucleotide-sugar biosynthesis; ADP-L-glycero-beta-D-manno-heptose biosynthesis; ADP-L-glycero-beta-D-manno-heptose from D-glycero-beta-D-manno-heptose 7-phosphate: step 4/4. Its function is as follows. Catalyzes the interconversion between ADP-D-glycero-beta-D-manno-heptose and ADP-L-glycero-beta-D-manno-heptose via an epimerization at carbon 6 of the heptose. In Shewanella frigidimarina (strain NCIMB 400), this protein is ADP-L-glycero-D-manno-heptose-6-epimerase.